The primary structure comprises 364 residues: UDP-N-acetylglucosamine--N-acetylmuramyl-(pentapeptide) pyrophosphoryl-undecaprenol N-acetylglucosamine transferase (364 aa).

Residues 19-21 (TGG), N131, R167, S195, I250, and Q295 contribute to the UDP-N-acetyl-alpha-D-glucosamine site.

Belongs to the glycosyltransferase 28 family. MurG subfamily.

It localises to the cell inner membrane. It carries out the reaction di-trans,octa-cis-undecaprenyl diphospho-N-acetyl-alpha-D-muramoyl-L-alanyl-D-glutamyl-meso-2,6-diaminopimeloyl-D-alanyl-D-alanine + UDP-N-acetyl-alpha-D-glucosamine = di-trans,octa-cis-undecaprenyl diphospho-[N-acetyl-alpha-D-glucosaminyl-(1-&gt;4)]-N-acetyl-alpha-D-muramoyl-L-alanyl-D-glutamyl-meso-2,6-diaminopimeloyl-D-alanyl-D-alanine + UDP + H(+). It functions in the pathway cell wall biogenesis; peptidoglycan biosynthesis. Its function is as follows. Cell wall formation. Catalyzes the transfer of a GlcNAc subunit on undecaprenyl-pyrophosphoryl-MurNAc-pentapeptide (lipid intermediate I) to form undecaprenyl-pyrophosphoryl-MurNAc-(pentapeptide)GlcNAc (lipid intermediate II). The sequence is that of UDP-N-acetylglucosamine--N-acetylmuramyl-(pentapeptide) pyrophosphoryl-undecaprenol N-acetylglucosamine transferase from Xylella fastidiosa (strain Temecula1 / ATCC 700964).